The chain runs to 210 residues: Imidazoleglycerol-phosphate dehydratase (210 aa).

It belongs to the imidazoleglycerol-phosphate dehydratase family.

It carries out the reaction D-erythro-1-(imidazol-4-yl)glycerol 3-phosphate = 3-(imidazol-4-yl)-2-oxopropyl phosphate + H2O. It functions in the pathway amino-acid biosynthesis; L-histidine biosynthesis; L-histidine from 5-phospho-alpha-D-ribose 1-diphosphate: step 6/9. This chain is Imidazoleglycerol-phosphate dehydratase (HIS3), found in Candida glabrata (strain ATCC 2001 / BCRC 20586 / JCM 3761 / NBRC 0622 / NRRL Y-65 / CBS 138) (Yeast).